The chain runs to 215 residues: Cytochrome b6 (215 aa).

The helical transmembrane segment at 32-52 threads the bilayer; that stretch reads IFYCFGGITLTCFLIQVATGF. C35 is a heme c binding site. Residues H86 and H100 each contribute to the heme b site. A run of 3 helical transmembrane segments spans residues 90 to 110, 116 to 136, and 186 to 206; these read ASMM…TGGF, LTWV…VTGY, and LHTF…FLMI. 2 residues coordinate heme b: H187 and H202.

This sequence belongs to the cytochrome b family. PetB subfamily. As to quaternary structure, the 4 large subunits of the cytochrome b6-f complex are cytochrome b6, subunit IV (17 kDa polypeptide, PetD), cytochrome f and the Rieske protein, while the 4 small subunits are PetG, PetL, PetM and PetN. The complex functions as a dimer. The cofactor is heme b. Requires heme c as cofactor.

The protein localises to the plastid. Its subcellular location is the chloroplast thylakoid membrane. Its function is as follows. Component of the cytochrome b6-f complex, which mediates electron transfer between photosystem II (PSII) and photosystem I (PSI), cyclic electron flow around PSI, and state transitions. This is Cytochrome b6 from Nephroselmis olivacea (Green alga).